The primary structure comprises 719 residues: MNFLNYFYHSKKILLQKIDGQFMKVSLNWLKALGNIKTIDIDNKYSTNTAGFEVEAIESIIIGGEIDHILDISSTANRSDVLSMIGLSREVSALTGSSMFQLYINPIIDIFSKKETIISNHDLLNCDNYFAAIIDEIRVKDSPDWLKNRLLSSGFTHRNLLTDISNYIMLKWGQPINIIDLNKINNMNHKNSLTIRSNFPLGSNDQIKLNNENIELNKNILVTQVNTNVTSIAGIGSNSDFDTDYNTKSILVESAIFKQSVVRKSSRVLNIRTESSIRQERGLNVDNWKNAHFEALALITDLTCGNIRDTFCREKITDHALNINLSIKKVHDILGPIMYNGQTRFLFFEEIQNILHSLNFDLIYQNKENIEVTVPNYRREDVFREIDVIEEIARIYGYHKFRSSVPNIQFNKRLSTKRKFIDKSRSILRNLGLTELVHYSLIKSKGNIALNNPLIQDYSNLRGSLLEGLIESNLYNIKQSNQTIDSFEIGTVFHNDQNKIVETTNLAIILGGNLDIRSTWSHPAHSLNWYEAKGIVENFFQRLNRQIEWTKKDILDGRIKFIQKGKFATLIYNNIIIGIFSELNQATYSELGLNTKLFFLEVNLNILEDCHNEFNYLSYQIQPYSKYPSIIRDLSLIIPKNMEIKYLLKLLDQFYDKDLESTTLFDQYIDESIGKEKKSIGLRFTYRSNEKTLTNSEIDYKQHQLQKKIVKQLNLKIRQ.

The B5 domain occupies 318–403 (DHALNINLSI…RIYGYHKFRS (86 aa)). Residues Asp381, Asp387, Glu390, and Glu391 each coordinate Mg(2+). The region spanning 625–718 (SKYPSIIRDL…IVKQLNLKIR (94 aa)) is the FDX-ACB domain.

This sequence belongs to the phenylalanyl-tRNA synthetase beta subunit family. Type 1 subfamily. In terms of assembly, tetramer of two alpha and two beta subunits. Mg(2+) is required as a cofactor.

The protein localises to the plastid. Its subcellular location is the chloroplast. The catalysed reaction is tRNA(Phe) + L-phenylalanine + ATP = L-phenylalanyl-tRNA(Phe) + AMP + diphosphate + H(+). This is Phenylalanine--tRNA ligase beta subunit, chloroplastic from Pyropia yezoensis (Susabi-nori).